Consider the following 231-residue polypeptide: Large ribosomal subunit protein uL1 (231 aa).

Belongs to the universal ribosomal protein uL1 family. As to quaternary structure, part of the 50S ribosomal subunit.

Its function is as follows. Binds directly to 23S rRNA. The L1 stalk is quite mobile in the ribosome, and is involved in E site tRNA release. In terms of biological role, protein L1 is also a translational repressor protein, it controls the translation of the L11 operon by binding to its mRNA. The polypeptide is Large ribosomal subunit protein uL1 (Buchnera aphidicola subsp. Acyrthosiphon pisum (strain APS) (Acyrthosiphon pisum symbiotic bacterium)).